The chain runs to 221 residues: Transcription repressor OFP8 (221 aa).

A compositionally biased stretch (acidic residues) spans 124–138 (EDEGDKEESEDDDSD). The disordered stretch occupies residues 124–147 (EDEGDKEESEDDDSDTLFSSRSFS). Residues 158 to 217 (VVKKSKDPYEDFRTSMVEMIVERQIFAPAELQQLLQCFLSLNSRQHHKVIVQVFLEIYAT) enclose the OVATE domain.

As to expression, expressed in roots, rosette and cauline leaves, shoots, stems, flower buds and siliques.

It localises to the nucleus. Its function is as follows. Transcriptional repressor that regulates multiple aspects of plant growth and development through the regulation of BEL1-LIKE (BLH) and KNOX TALE (KNAT) homeodomain transcription factors. The chain is Transcription repressor OFP8 (OFP8) from Arabidopsis thaliana (Mouse-ear cress).